A 593-amino-acid chain; its full sequence is Regulatory protein NPR1 (593 aa).

4 positions are modified to phosphoserine: serine 11, serine 15, serine 55, and serine 59. The BTB domain occupies 65 to 144 (SDAKLVLSDG…VYSSRVRPPP (80 aa)). A C2HC NPR-type zinc finger spans residues 147–161 (VSECADENCCHVACR). 2 residues coordinate Zn(2+): cysteine 150 and cysteine 155. An S-nitrosocysteine modification is found at cysteine 156. Zn(2+) contacts are provided by histidine 157 and cysteine 160. 5 ANK repeats span residues 229 to 258 (KSNV…ELGL), 265 to 295 (KHVS…NLDD), 297 to 324 (CALH…DVNH), 328 to 357 (RGYT…SASE), and 361 to 397 (EGRT…CVEI). The SIM3, required fo binding to SUMO3 and subsequent sumoylation signature appears at 345–348 (ILSL). The interval 387-525 (HSLKGRLCVE…DQIMNCEDLT (139 aa)) is salicylic acid-binding core (SBC). Arginine 432 is a binding site for salicylate. Positions 537 to 554 (KRLQKKQRYMEIQETLKK) match the Nuclear localization signal motif. The interval 563–593 (LGNSSLTDSTSSTSKSTGGKRSNRKLSHRRR) is disordered. Residues 566-579 (SSLTDSTSSTSKST) are compositionally biased toward low complexity. Residues 583–593 (RSNRKLSHRRR) show a composition bias toward basic residues.

The protein belongs to the plant 'ANKYRIN-BTB/POZ' family. 'NPR1-like' subfamily. In terms of assembly, homodimer. Oligomer of dimers in an uninduced quiescent state; disulfide-linked. Forms activated (i.e. sumoylated) homodimers and monomers upon systemic acquired resistance (SAR) induction. Interacts with TGA1, TGA3, TGA4, TGA5, TGA6, TGA7 and with reduced forms of TGA1 and TGA4. Activated homodimer binds two TGA3 dimers in the presence of DNA via its ANK 2 repeat (265-295), thus forming a TGA3(2)-NPR1(2)-TGA3(2) complex in which NPR1 serves as a transcription cofactor by bridging two transcription factor complexes in an enhanceosome. Interacts with NIMIN-1 and NIMIN-3 via its C-terminal region, and with NIMIN-2 via its N-terminal region. Interacts with SUMO3 but not with SUMO1 and SUMO2; this interaction is required for phosphorylation at Ser-11 and Ser-15, and triggers activation by sumoylation and subsequent degradation. Binds to NPR3 and NPR4; these interactions are promoted by association of salicylic acid (SA) with NPR3, but disrupted by SA association with NPR4, probably due to conformational changes. Binds to CUL3A, a core component of the cullin-RING ubiquitin ligases (CRL); this interaction requires NPR3 and NPR4. Interacts with NPR2 independently of SA. Binds to WRKY70 when unmodified (i.e. not sumoylated). In terms of processing, phosphorylation at Ser-55 and Ser-59 prevents sumoylation to ensure stability and quiescence. Post-translationally, phosphorylated at Ser-11 and Ser-15 in the nucleus; facilitates its recruitment to a cullin3-based ubiquitin ligase leading to polyubiquitination and subsequent CUL3/CSN-mediated degradation. This phosphorylation at Ser-11 and Ser-15 requires interaction with SUMO3, and promotes in turn activation by sumoylation and subsequent degradation. Ubiquitinated. In terms of processing, sumoylated by SUMO3 independently of an E3 ligase to activate defense gene expression by switching from association with WRKY transcriptional repressors (e.g. WRKY70) to TGA transcriptional activators (e.g. TGA3). Sumoylation is inhibited by phosphorylation at Ser-55 and Ser-59, but seems to promote phosphorylation at Ser-11 and Ser-15. Sumoylation also triggers degradation, making immune induction transient. Post-translationally, the Cys-82-SH group reacts with Cys-216-SH of the other subunit to form an intermolecular disulfide. This disulfide might subsequently be reduced upon systemic acquired resistance (SAR) induction. S-nitrosylation at Cys-156 facilitates its oligomerization.

It localises to the cytoplasm. It is found in the nucleus. Its subcellular location is the nuclear body. The protein operates within protein modification; protein ubiquitination. Salicylic acid (SA)-binding substrate-specific adapter of an E3 ubiquitin-protein ligase complex (CUL3-RBX1-BTB) which mediates the ubiquitination and subsequent proteasomal degradation of target proteins. Transcription cofactor that represses gene expression in the absence of salicylic acid (SA), when attached to negative cis-elements (W-box) with WRKY transcription factors (e.g. WRKY70), but stimulates gene expression upon activation by SA, when sumoylated and attached to positive cis-elements (as-1) with TGA transcription factors (e.g. TGA3), thus confering immunity through a series of gene regulations ending in a significant increase in antimicrobial and defense genes expression (e.g. PR-1 and PR-2). Binds to SA with low capacity; this leads to conformational changes. Key positive regulator of the SA-dependent signaling pathway that negatively regulates jasmonic acid (JA)-dependent signaling pathway. Controls the onset of systemic acquired resistance (SAR). Upon SAR induction, a biphasic change in cellular reduction potential occurs, resulting in reduction of the cytoplasmic oligomeric form to dimeric and monomeric forms, which accumulate in the nucleus and activate gene expression. Appears to control lesion expansion by acting as an inhibitor of programmed cell death (PCD) during effector-triggered immunity (ETI) that occurs in response to incompatible interaction with avirulent pathogenic bacteria (i.e. Pseudomonas syringae ES4326/avrRpt2) ending in a hypersensitive response (HR). Phosphorylated form is target of proteasome degradation. The protein is Regulatory protein NPR1 of Arabidopsis thaliana (Mouse-ear cress).